A 449-amino-acid polypeptide reads, in one-letter code: Probable glucuronosyltransferase 47 A (449 aa).

Residues 1–31 are Cytoplasmic-facing; the sequence is MEHPLECADSCSLAMSWFCNKKCRGWGLMKR. The helical; Signal-anchor for type II membrane protein transmembrane segment at 32 to 52 threads the bilayer; it reads TVVASGLRSVVLLLLFIYFVQ. Over 53–449 the chain is Lumenal; the sequence is DVTAEMGHQR…GDLYPWGNDL (397 aa). N-linked (GlcNAc...) asparagine glycans are attached at residues Asn-172 and Asn-433.

The protein belongs to the glycosyltransferase 47 family. As to expression, mostly expressed in newly formed or expanding tissues.

It localises to the golgi apparatus membrane. Its function is as follows. Involved in the synthesis of glucuronoxylan hemicellulose in secondary cell walls. The chain is Probable glucuronosyltransferase 47 A from Physcomitrium patens (Spreading-leaved earth moss).